Here is a 275-residue protein sequence, read N- to C-terminus: 3-methyl-2-oxobutanoate hydroxymethyltransferase (275 aa).

Residues Asp49 and Asp88 each contribute to the Mg(2+) site. 3-methyl-2-oxobutanoate contacts are provided by residues 49 to 50 (DS), Asp88, and Lys118. Position 120 (Glu120) interacts with Mg(2+). The active-site Proton acceptor is Glu187.

The protein belongs to the PanB family. As to quaternary structure, homodecamer; pentamer of dimers. It depends on Mg(2+) as a cofactor.

Its subcellular location is the cytoplasm. The enzyme catalyses 3-methyl-2-oxobutanoate + (6R)-5,10-methylene-5,6,7,8-tetrahydrofolate + H2O = 2-dehydropantoate + (6S)-5,6,7,8-tetrahydrofolate. It functions in the pathway cofactor biosynthesis; (R)-pantothenate biosynthesis; (R)-pantoate from 3-methyl-2-oxobutanoate: step 1/2. Catalyzes the reversible reaction in which hydroxymethyl group from 5,10-methylenetetrahydrofolate is transferred onto alpha-ketoisovalerate to form ketopantoate. The polypeptide is 3-methyl-2-oxobutanoate hydroxymethyltransferase (Nitrobacter hamburgensis (strain DSM 10229 / NCIMB 13809 / X14)).